The chain runs to 129 residues: Succinate dehydrogenase subunit 3-1, mitochondrial (129 aa).

The transit peptide at 1 to 58 directs the protein to the mitochondrion; the sequence is MEKYHSNSRFAPFRDAPFALRGALGSSGSSFSSIDSLRRSSTLEQARGYTSRPLGAVR. A compositionally biased stretch (low complexity) spans 25–35; sequence GSSGSSFSSID. The interval 25–80 is disordered; sequence GSSGSSFSSIDSLRRSSTLEQARGYTSRPLGAVRPKMLPSGCRPLHTSHPLSAPVA. H87 is a binding site for heme. Residues 105 to 127 traverse the membrane as a helical segment; it reads IFGAALGAAIISIPLATKFSLMF.

In terms of assembly, component of complex II composed of eight subunits in plants: four classical SDH subunits SDH1, SDH2, SDH3 and SDH4 (a flavoprotein (FP), an iron-sulfur protein (IP), and a cytochrome b composed of a large and a small subunit.), as well as four subunits unknown in mitochondria from bacteria and heterotrophic eukaryotes. It depends on heme as a cofactor.

Its subcellular location is the mitochondrion inner membrane. It participates in carbohydrate metabolism; tricarboxylic acid cycle. Its function is as follows. Membrane-anchoring subunit of succinate dehydrogenase (SDH). In Oryza sativa subsp. japonica (Rice), this protein is Succinate dehydrogenase subunit 3-1, mitochondrial.